Consider the following 387-residue polypeptide: Mannitol-1-phosphate 5-dehydrogenase (387 aa).

Residue 3–14 (ALHFGAGNIGRG) participates in NAD(+) binding.

The protein belongs to the mannitol dehydrogenase family.

It carries out the reaction D-mannitol 1-phosphate + NAD(+) = beta-D-fructose 6-phosphate + NADH + H(+). The chain is Mannitol-1-phosphate 5-dehydrogenase from Yersinia pseudotuberculosis serotype O:3 (strain YPIII).